The sequence spans 693 residues: Bifunctional ribose 1,5-bisphosphokinase-thymidine phosphorylase (693 aa).

A ribose 1,5-bisphosphokinase region spans residues 1–193 (MSVMGSGLFF…AQTARLRLVR (193 aa)). 14–21 (GPSGSGKD) provides a ligand contact to ATP. The interval 194-693 (MAIETGRRNV…KAFRRINPER (500 aa)) is thymidinephosphorylase.

This sequence in the N-terminal section; belongs to the ribose 1,5-bisphosphokinase family. It in the C-terminal section; belongs to the thymidine/pyrimidine-nucleoside phosphorylase family. Type 2 subfamily.

The enzyme catalyses alpha-D-ribose 1,5-bisphosphate + ATP = 5-phospho-alpha-D-ribose 1-diphosphate + ADP. The catalysed reaction is thymidine + phosphate = 2-deoxy-alpha-D-ribose 1-phosphate + thymine. The protein operates within metabolic intermediate biosynthesis; 5-phospho-alpha-D-ribose 1-diphosphate biosynthesis; 5-phospho-alpha-D-ribose 1-diphosphate from D-ribose 5-phosphate (route II): step 3/3. In terms of biological role, catalyzes the phosphorylation of ribose 1,5-bisphosphate to 5-phospho-D-ribosyl alpha-1-diphosphate (PRPP). This Azorhizobium caulinodans (strain ATCC 43989 / DSM 5975 / JCM 20966 / LMG 6465 / NBRC 14845 / NCIMB 13405 / ORS 571) protein is Bifunctional ribose 1,5-bisphosphokinase-thymidine phosphorylase (phnN).